Consider the following 247-residue polypeptide: NADH dehydrogenase [ubiquinone] flavoprotein 2, mitochondrial (247 aa).

A mitochondrion-targeting transit peptide spans 1–40; that stretch reads MFRSLLKRTTFLNQLNKSNGFNRNYFKQSTLTRSDALSRH. [2Fe-2S] cluster-binding residues include C135, C140, C176, and C180. The disordered stretch occupies residues 211-247; it reads NKPTKIGPQTHRKAAEGPQGKTTLLEPPVGPTCRDDL.

It belongs to the complex I 24 kDa subunit family. Complex I is composed of 45 different subunits. This is a component of the flavoprotein-sulfur (FP) fragment of the enzyme. [2Fe-2S] cluster is required as a cofactor.

Its subcellular location is the mitochondrion inner membrane. It carries out the reaction a ubiquinone + NADH + 5 H(+)(in) = a ubiquinol + NAD(+) + 4 H(+)(out). Functionally, core subunit of the mitochondrial membrane respiratory chain NADH dehydrogenase (Complex I) that is believed to belong to the minimal assembly required for catalysis. Complex I functions in the transfer of electrons from NADH to the respiratory chain. The immediate electron acceptor for the enzyme is believed to be ubiquinone. This Dictyostelium discoideum (Social amoeba) protein is NADH dehydrogenase [ubiquinone] flavoprotein 2, mitochondrial (ndufv2).